A 507-amino-acid polypeptide reads, in one-letter code: Histidine ammonia-lyase (507 aa).

The segment at residues 141 to 143 (ASG) is a cross-link (5-imidazolinone (Ala-Gly)). Ser142 carries the 2,3-didehydroalanine (Ser) modification.

It belongs to the PAL/histidase family. In terms of processing, contains an active site 4-methylidene-imidazol-5-one (MIO), which is formed autocatalytically by cyclization and dehydration of residues Ala-Ser-Gly.

It is found in the cytoplasm. The catalysed reaction is L-histidine = trans-urocanate + NH4(+). It participates in amino-acid degradation; L-histidine degradation into L-glutamate; N-formimidoyl-L-glutamate from L-histidine: step 1/3. In Cereibacter sphaeroides (strain ATCC 17029 / ATH 2.4.9) (Rhodobacter sphaeroides), this protein is Histidine ammonia-lyase.